A 204-amino-acid chain; its full sequence is Holliday junction branch migration complex subunit RuvA (204 aa).

The segment at 1-67 (MIAFLSGHLV…ETELVLYGFG (67 aa)) is domain I. The interval 68 to 146 (SPAERDLFVE…HWRQGMGVAD (79 aa)) is domain II. The tract at residues 147-157 (QPLAGGPPMPI) is flexible linker. The interval 157-204 (IREEVEMALLALGYSTQEIQAALQALPTHPRPTEDWLRDAITYLSQQP) is domain III.

It belongs to the RuvA family. In terms of assembly, homotetramer. Forms an RuvA(8)-RuvB(12)-Holliday junction (HJ) complex. HJ DNA is sandwiched between 2 RuvA tetramers; dsDNA enters through RuvA and exits via RuvB. An RuvB hexamer assembles on each DNA strand where it exits the tetramer. Each RuvB hexamer is contacted by two RuvA subunits (via domain III) on 2 adjacent RuvB subunits; this complex drives branch migration. In the full resolvosome a probable DNA-RuvA(4)-RuvB(12)-RuvC(2) complex forms which resolves the HJ.

The protein localises to the cytoplasm. The RuvA-RuvB-RuvC complex processes Holliday junction (HJ) DNA during genetic recombination and DNA repair, while the RuvA-RuvB complex plays an important role in the rescue of blocked DNA replication forks via replication fork reversal (RFR). RuvA specifically binds to HJ cruciform DNA, conferring on it an open structure. The RuvB hexamer acts as an ATP-dependent pump, pulling dsDNA into and through the RuvAB complex. HJ branch migration allows RuvC to scan DNA until it finds its consensus sequence, where it cleaves and resolves the cruciform DNA. This chain is Holliday junction branch migration complex subunit RuvA, found in Synechococcus sp. (strain JA-2-3B'a(2-13)) (Cyanobacteria bacterium Yellowstone B-Prime).